The following is a 465-amino-acid chain: E3 ubiquitin-protein ligase parkin (465 aa).

The Ubiquitin-like domain occupies Met1–Lys76. Ser65 carries the phosphoserine; by PINK1 modification. The segment at Gln71–Ile96 is disordered. Residues Ser77 to Pro237 are necessary for PINK1-dependent localization to mitochondria. A Phosphothreonine modification is found at Thr80. Over residues Thr80 to Glu93 the composition is skewed to polar residues. The segment at Pro141–Ala225 adopts an RING-type 0; atypical zinc-finger fold. Position 175 is a phosphothreonine; by PINK1 (Thr175). The interval Thr204–Cys238 is SYT11 binding 1. Phosphothreonine is present on Thr217. Residues Arg234–Val465 are TRIAD supradomain. Positions 238, 241, 253, 257, 260, 263, 289, 293, 332, and 337 each coordinate Zn(2+). The RING-type 1 zinc finger occupies Cys238–Cys293. The tract at residues His257–Cys293 is SYT11 binding 2. The IBR-type zinc finger occupies Asn313–Cys377. Lys349 is covalently cross-linked (Glycyl lysine isopeptide (Lys-Gly) (interchain with G-Cter in ISG15)). Residues Cys352, Cys360, Cys365, and Cys368 each contribute to the Zn(2+) site. Lys369 is covalently cross-linked (Glycyl lysine isopeptide (Lys-Gly) (interchain with G-Cter in ISG15)). Zn(2+) contacts are provided by His373 and Cys377. An REP region spans residues Asp378 to Thr410. Zn(2+) contacts are provided by Cys418 and Cys421. The segment at Cys418–Cys449 adopts an RING-type 2; atypical zinc-finger fold. Cys431 is a catalytic residue. The Zn(2+) site is built by Cys436, Cys441, Cys446, Cys449, Cys457, and His461.

This sequence belongs to the RBR family. Parkin subfamily. As to quaternary structure, forms an E3 ubiquitin ligase complex with UBE2L3 or UBE2L6. Mediates 'Lys-63'-linked polyubiquitination by associating with UBE2V1. Part of a SCF-like complex, consisting of PRKN, CUL1 and FBXW7. Interacts with SNCAIP. Binds to the C2A and C2B domains of SYT11. Interacts and regulates the turnover of SEPTIN5. Part of a complex, including STUB1, HSP70 and GPR37. The amount of STUB1 in the complex increases during ER stress. STUB1 promotes the dissociation of HSP70 from PRKN and GPR37, thus facilitating PRKN-mediated GPR37 ubiquitination. HSP70 transiently associates with unfolded GPR37 and inhibits the E3 activity of PRKN, whereas, STUB1 enhances the E3 activity of PRKN through promotion of dissociation of HSP70 from PRKN-GPR37 complexes. Interacts with PSMD4 and PACRG. Interacts with LRRK2. Interacts with RANBP2. Interacts with SUMO1 but not SUMO2, which promotes nuclear localization and autoubiquitination. Interacts (via first RING-type domain) with AIMP2 (via N-terminus). Interacts with PSMA7 and RNF41. Interacts with PINK1. Forms a complex with PINK1 and PARK7. Interacts with CHPF, the interaction with isoform 2 may facilitate PRKN transport into the mitochondria. Interacts with MFN2 (phosphorylated), promotes PRKN localization in dysfunctional depolarized mitochondria. Interacts with FBXO7; this promotes translocation to dysfunctional depolarized mitochondria. Interacts with ZNF746. Interacts with heat shock protein 70 family members, including HSPA1L, HSPA1A and HSPA8; interaction HSPA1L promotes translocation to damaged mitochondria. Interacts with BAG4 and, to a lesser extent, BAG5; interaction with BAG4 inhibits translocation to damaged mitochondria. Forms a complex with PRKN and PARK7. Interacts with AMBRA1. Auto-ubiquitinates in an E2-dependent manner leading to its own degradation. Also polyubiquitinated by RNF41 for proteasomal degradation. In terms of processing, S-nitrosylated. Post-translationally, phosphorylated. Activation requires phosphorylation at Ser-65 by PINK1 and binding to PINK1 phosphorylated ubiquitin. Phosphorylation at Thr-175 by PINK1 and at Thr-217 is important for mitochondrial localization. In terms of tissue distribution, largely confined to neuronal elements, including fibers and neuropil. Highly expressed at the forebrain level, in pyramidal cells of layer V, in various cortical regions and cerebellum. Expressed in the nucleus of diagonal band of Broca, nucleus basalis, bed nucleus of the stria terminalis, and olfactory tubercle. Moderate expression is seen in most neurons of the subthalamic nucleus, heart, skeletal muscle and testis. Moderate expression was found in frontal cortex, parietal cortex, cerebellum, heart, skeletal muscle and testis.

The protein resides in the cytoplasm. It localises to the cytosol. It is found in the nucleus. Its subcellular location is the endoplasmic reticulum. The protein localises to the mitochondrion. The protein resides in the mitochondrion outer membrane. It localises to the cell projection. It is found in the neuron projection. Its subcellular location is the postsynaptic density. The protein localises to the presynapse. It catalyses the reaction [E2 ubiquitin-conjugating enzyme]-S-ubiquitinyl-L-cysteine + [acceptor protein]-L-lysine = [E2 ubiquitin-conjugating enzyme]-L-cysteine + [acceptor protein]-N(6)-ubiquitinyl-L-lysine.. The protein operates within protein modification; protein ubiquitination. Its activity is regulated as follows. In the autoinhibited state the side chain of Phe-463 inserts into a hydrophobic groove in RING-0, occluding the ubiquitin acceptor site Cys-431, whereas the REP repressor element binds RING-1 and blocks its E2-binding site. Activation of PRKN requires 2 steps: (1) phosphorylation at Ser-65 by PINK1 and (2) binding to phosphorylated ubiquitin, leading to unlock repression of the catalytic Cys-431 by the RING-0 region via an allosteric mechanism and converting PRKN to its fully-active form. According to another report, phosphorylation at Ser-65 by PINK1 is not essential for activation and only binding to phosphorylated ubiquitin is essential to unlock repression. In addition, ISG15 conjugation positively regulates its ubiquitin E3 ligase activity by suppressing the intramolecular interaction that maintains its autoinhibited conformation. Functionally, functions within a multiprotein E3 ubiquitin ligase complex, catalyzing the covalent attachment of ubiquitin moieties onto substrate proteins. Substrates include SYT11 and VDAC1. Other substrates are BCL2, CCNE1, GPR37, RHOT1/MIRO1, MFN1, MFN2, STUB1, SNCAIP, SEPTIN5, TOMM20, USP30, ZNF746, MIRO1 and AIMP2. Mediates monoubiquitination as well as 'Lys-6', 'Lys-11', 'Lys-48'-linked and 'Lys-63'-linked polyubiquitination of substrates depending on the context. Participates in the removal and/or detoxification of abnormally folded or damaged protein by mediating 'Lys-63'-linked polyubiquitination of misfolded proteins such as PARK7: 'Lys-63'-linked polyubiquitinated misfolded proteins are then recognized by HDAC6, leading to their recruitment to aggresomes, followed by degradation. Mediates 'Lys-63'-linked polyubiquitination of a 22 kDa O-linked glycosylated isoform of SNCAIP, possibly playing a role in Lewy-body formation. Mediates monoubiquitination of BCL2, thereby acting as a positive regulator of autophagy. Protects against mitochondrial dysfunction during cellular stress, by acting downstream of PINK1 to coordinate mitochondrial quality control mechanisms that remove and replace dysfunctional mitochondrial components. Depending on the severity of mitochondrial damage and/or dysfunction, activity ranges from preventing apoptosis and stimulating mitochondrial biogenesis to regulating mitochondrial dynamics and eliminating severely damaged mitochondria via mitophagy. Activation and recruitment onto the outer membrane of damaged/dysfunctional mitochondria (OMM) requires PINK1-mediated phosphorylation of both PRKN and ubiquitin. After mitochondrial damage, functions with PINK1 to mediate the decision between mitophagy or preventing apoptosis by inducing either the poly- or monoubiquitination of VDAC1, respectively; polyubiquitination of VDAC1 promotes mitophagy, while monoubiquitination of VDAC1 decreases mitochondrial calcium influx which ultimately inhibits apoptosis. When cellular stress results in irreversible mitochondrial damage, promotes the autophagic degradation of dysfunctional depolarized mitochondria (mitophagy) by promoting the ubiquitination of mitochondrial proteins such as TOMM20, RHOT1/MIRO1, MFN1 and USP30. Preferentially assembles 'Lys-6'-, 'Lys-11'- and 'Lys-63'-linked polyubiquitin chains, leading to mitophagy. The PINK1-PRKN pathway also promotes fission of damaged mitochondria by PINK1-mediated phosphorylation which promotes the PRKN-dependent degradation of mitochondrial proteins involved in fission such as MFN2. This prevents the refusion of unhealthy mitochondria with the mitochondrial network or initiates mitochondrial fragmentation facilitating their later engulfment by autophagosomes. Regulates motility of damaged mitochondria via the ubiquitination and subsequent degradation of MIRO1 and MIRO2; in motor neurons, this likely inhibits mitochondrial intracellular anterograde transport along the axons which probably increases the chance of the mitochondria undergoing mitophagy in the soma. Involved in mitochondrial biogenesis via the 'Lys-48'-linked polyubiquitination of transcriptional repressor ZNF746/PARIS which leads to its subsequent proteasomal degradation and allows activation of the transcription factor PPARGC1A. Limits the production of reactive oxygen species (ROS). Regulates cyclin-E during neuronal apoptosis. In collaboration with CHPF isoform 2, may enhance cell viability and protect cells from oxidative stress. Independently of its ubiquitin ligase activity, protects from apoptosis by the transcriptional repression of p53/TP53. May protect neurons against alpha synuclein toxicity, proteasomal dysfunction, GPR37 accumulation, and kainate-induced excitotoxicity. May play a role in controlling neurotransmitter trafficking at the presynaptic terminal and in calcium-dependent exocytosis. May represent a tumor suppressor gene. The chain is E3 ubiquitin-protein ligase parkin from Rattus norvegicus (Rat).